The following is a 427-amino-acid chain: Serine--tRNA ligase (427 aa).

233–235 (TGE) is a binding site for L-serine. Position 264-266 (264-266 (RSE)) interacts with ATP. Position 287 (E287) interacts with L-serine. 351–354 (EVSS) provides a ligand contact to ATP. S387 is an L-serine binding site.

The protein belongs to the class-II aminoacyl-tRNA synthetase family. Type-1 seryl-tRNA synthetase subfamily. As to quaternary structure, homodimer. The tRNA molecule binds across the dimer.

Its subcellular location is the cytoplasm. The catalysed reaction is tRNA(Ser) + L-serine + ATP = L-seryl-tRNA(Ser) + AMP + diphosphate + H(+). It carries out the reaction tRNA(Sec) + L-serine + ATP = L-seryl-tRNA(Sec) + AMP + diphosphate + H(+). The protein operates within aminoacyl-tRNA biosynthesis; selenocysteinyl-tRNA(Sec) biosynthesis; L-seryl-tRNA(Sec) from L-serine and tRNA(Sec): step 1/1. Its function is as follows. Catalyzes the attachment of serine to tRNA(Ser). Is also able to aminoacylate tRNA(Sec) with serine, to form the misacylated tRNA L-seryl-tRNA(Sec), which will be further converted into selenocysteinyl-tRNA(Sec). The sequence is that of Serine--tRNA ligase from Buchnera aphidicola subsp. Acyrthosiphon pisum (strain 5A).